The primary structure comprises 290 residues: Triplex capsid protein 1 (290 aa).

This sequence belongs to the herpesviridae TRX1 protein family. As to quaternary structure, interacts with TRX2, MCP and capsid vertex component 2/CVC2.

The protein localises to the virion. It localises to the host nucleus. Its function is as follows. Structural component of the T=16 icosahedral capsid. The capsid is composed of pentamers and hexamers of major capsid protein/MCP, which are linked together by heterotrimers called triplexes. These triplexes are formed by a single molecule of triplex protein 1/TRX1 and two copies of triplex protein 2/TRX2. Additionally, TRX1 is required for efficient transport of TRX2 to the nucleus, which is the site of capsid assembly. The protein is Triplex capsid protein 1 of Human cytomegalovirus (strain AD169) (HHV-5).